Consider the following 697-residue polypeptide: MTSSLYLSTTEARSGKSLVVLGILDLILKKTTRIAYFRPIIQDPVNGKHDNNIILVLENFRLQQTYTDSFGLYFHEAVSLASDGAIDQVLDRILAKYRHLADQVDFILCEGSDYLGEESAFEFDLNTTIAKMLNCPILLLGNAMGNTIADSLQPIDMALNSYDQESCQVVGVIINRVQPELATEIQAQLEQRYGDRPMVLGTIPQDIMLKSLRLREIVSGLNAQVLSGADLLDNLVYHHLVVAMHIAHALHWLHEKNTLIITPGDRGDIILGVMQAHRSLNYPSIAGILLTADYHPEPAIMKLIEGLPDAPPLLLTSTHTHETSARLETLHPALSPTDNYKIRHSIALFQQQIDGEKLLNYLKTIRSKGITPKLFLYNLVQAATAAQRHIVLPEGEEIRILKAAASLINHGIVRLTLLGNIEAIEQTVKINHIDLDLSKVRLINPKTSPDRERYAETYYQLRKHKGVTLAMARDILTDISYFGTMMVHLGEADGMVSGSVNTTQHTVRPALQIIKTQPGFSLVSSVFFMCLEDRVLVYGDCAVNPDPNAEQLAEIALTSAATAKNFGIEPRVALLSYSSGSSGQGADVEKVRQATAIAKEREPDLALEGPIQYDAAVDSTVAAQKMPGSAVAGKATVFIFPDLNTGNNTYKAVQRETKAIAIGPILQGLNKPVNDLSRGCLVEDIINTVVITALQVK.

The tract at residues 374-697 (LFLYNLVQAA…TVVITALQVK (324 aa)) is phosphate acetyltransferase.

In the N-terminal section; belongs to the CobB/CobQ family. It in the C-terminal section; belongs to the phosphate acetyltransferase and butyryltransferase family.

It is found in the cytoplasm. It carries out the reaction acetyl-CoA + phosphate = acetyl phosphate + CoA. The protein operates within metabolic intermediate biosynthesis; acetyl-CoA biosynthesis; acetyl-CoA from acetate: step 2/2. Its function is as follows. Involved in acetate metabolism. This is Phosphate acetyltransferase (pta) from Synechocystis sp. (strain ATCC 27184 / PCC 6803 / Kazusa).